The following is a 519-amino-acid chain: Protein nucleotidyltransferase YdiU (519 aa).

ATP contacts are provided by Gly101, Gly103, Arg104, Lys123, Asp135, Gly136, Arg193, and Arg200. Asp271 (proton acceptor) is an active-site residue. Residues Asn272 and Asp281 each contribute to the Mg(2+) site. Asp281 is an ATP binding site.

The protein belongs to the SELO family. Mg(2+) is required as a cofactor. Requires Mn(2+) as cofactor.

It carries out the reaction L-seryl-[protein] + ATP = 3-O-(5'-adenylyl)-L-seryl-[protein] + diphosphate. It catalyses the reaction L-threonyl-[protein] + ATP = 3-O-(5'-adenylyl)-L-threonyl-[protein] + diphosphate. The enzyme catalyses L-tyrosyl-[protein] + ATP = O-(5'-adenylyl)-L-tyrosyl-[protein] + diphosphate. The catalysed reaction is L-histidyl-[protein] + UTP = N(tele)-(5'-uridylyl)-L-histidyl-[protein] + diphosphate. It carries out the reaction L-seryl-[protein] + UTP = O-(5'-uridylyl)-L-seryl-[protein] + diphosphate. It catalyses the reaction L-tyrosyl-[protein] + UTP = O-(5'-uridylyl)-L-tyrosyl-[protein] + diphosphate. Functionally, nucleotidyltransferase involved in the post-translational modification of proteins. It can catalyze the addition of adenosine monophosphate (AMP) or uridine monophosphate (UMP) to a protein, resulting in modifications known as AMPylation and UMPylation. The polypeptide is Protein nucleotidyltransferase YdiU (Tolumonas auensis (strain DSM 9187 / NBRC 110442 / TA 4)).